The chain runs to 352 residues: Phosphatidylglycerol--prolipoprotein diacylglyceryl transferase (352 aa).

Transmembrane regions (helical) follow at residues Trp20–Ala40, Phe55–Tyr75, Glu97–Ala117, and Val122–Gly142. An a 1,2-diacyl-sn-glycero-3-phospho-(1'-sn-glycerol)-binding site is contributed by Arg143. Transmembrane regions (helical) follow at residues Ser248–Trp268, Gly275–Phe295, and Trp314–Ala334.

This sequence belongs to the Lgt family.

Its subcellular location is the cell inner membrane. It catalyses the reaction L-cysteinyl-[prolipoprotein] + a 1,2-diacyl-sn-glycero-3-phospho-(1'-sn-glycerol) = an S-1,2-diacyl-sn-glyceryl-L-cysteinyl-[prolipoprotein] + sn-glycerol 1-phosphate + H(+). The protein operates within protein modification; lipoprotein biosynthesis (diacylglyceryl transfer). Its function is as follows. Catalyzes the transfer of the diacylglyceryl group from phosphatidylglycerol to the sulfhydryl group of the N-terminal cysteine of a prolipoprotein, the first step in the formation of mature lipoproteins. The protein is Phosphatidylglycerol--prolipoprotein diacylglyceryl transferase of Bdellovibrio bacteriovorus (strain ATCC 15356 / DSM 50701 / NCIMB 9529 / HD100).